The chain runs to 219 residues: Glutathione S-transferase U19 (219 aa).

A GST N-terminal domain is found at 3–82; that stretch reads NEVILLDFWP…YIDEVWSHKN (80 aa). Residues 13–14, 39–40, 53–54, and 66–67 each bind glutathione; these read SM, NK, KI, and ES. Residues 88-208 enclose the GST C-terminal domain; that stretch reads DPYLRAQARF…LPDPEKVTEF (121 aa). Serine 198 is modified (phosphoserine).

The protein belongs to the GST superfamily. Tau family.

The protein resides in the cytoplasm. Its subcellular location is the cytosol. The catalysed reaction is RX + glutathione = an S-substituted glutathione + a halide anion + H(+). Functionally, catalyzes the glutathionylation of 12-oxophytodienoate (OPDA). In vitro, possesses glutathione S-transferase activity toward 1-chloro-2,4-dinitrobenzene (CDNB) and benzyl isothiocyanate (BITC), and glutathione peroxidase activity toward cumene hydroperoxide. In Arabidopsis thaliana (Mouse-ear cress), this protein is Glutathione S-transferase U19 (GSTU19).